A 536-amino-acid chain; its full sequence is Protein Rep68 (536 aa).

One can recognise a PV NS1-Nuc domain in the interval 1-199; sequence MPGFYEIVIK…AQHLTHVSQT (199 aa). 3 residues coordinate a divalent metal cation: Glu-83, His-90, and His-92. The RCR-2 motif lies at 90–92; that stretch reads HMH. Tyr-156 (for nuclease activity) is an active-site residue. An RCR-3 motif is present at residues 156 to 160; that stretch reads YLLPK. The span at 196-211 shows a compositional bias: polar residues; it reads VSQTQEQNKENQNPNS. A disordered region spans residues 196–216; sequence VSQTQEQNKENQNPNSDAPVI. One can recognise an SF3 helicase domain in the interval 308 to 463; the sequence is DPQYAASVFL…LDHDFGKVTK (156 aa). 334–341 serves as a coordination point for ATP; that stretch reads GPATTGKT. Residues 488–536 form a disordered region; that stretch reads KGGAKKRPAPSDADISEPKRVRESVAQPSTSDAEASINYADRLARGHSL.

In terms of assembly, interacts with host TOPORS. Interacts with host KCTD5. It depends on a divalent metal cation as a cofactor.

The protein resides in the host nucleus. It carries out the reaction ATP + H2O = ADP + phosphate + H(+). Its function is as follows. Plays an essential role in the initiation of viral DNA synthesis. Binds specifically to an inverted terminal repeat element (ITR) on the 3' and 5' ends of the viral DNA, where it cleaves a site specifically to generate a priming site for initiation of the synthesis of a complementary strand. Also plays a role as transcriptional regulator, DNA helicase and as key factor in site-specific integration of the viral genome. Inhibits the host cell cycle G1/S and G2/M transitions. These arrests may provide essential cellular factors for viral DNA replication. The protein is Protein Rep68 (Rep68) of Mammalia (AAV-2).